We begin with the raw amino-acid sequence, 69 residues long: Large ribosomal subunit protein bL31 (69 aa).

Residues C17, C19, C37, and C40 each coordinate Zn(2+).

This sequence belongs to the bacterial ribosomal protein bL31 family. Type A subfamily. In terms of assembly, part of the 50S ribosomal subunit. Zn(2+) serves as cofactor.

Functionally, binds the 23S rRNA. The protein is Large ribosomal subunit protein bL31 of Clostridium botulinum (strain Eklund 17B / Type B).